Reading from the N-terminus, the 284-residue chain is uncharacterized protein (284 aa).

Positions 1–24 (MLYSRESRTTVLFLALVTSLTVLC) are cleaved as a signal peptide. Topologically, residues 25 to 84 (HSVDVTTVFTTSTITEITTVTAAPQPQNKAETALNTATNIIQTMQFLFNCAPFKWKGPLK) are cytoplasmic. The helical transmembrane segment at 85-104 (ITSCALNFIVLLLTAWGYLL) threads the bilayer. Residues 105–284 (KYLQENKLNS…SVHMYSSSLL (180 aa)) lie on the Extracellular side of the membrane. N-linked (GlcNAc...) asparagine glycosylation occurs at asparagine 270.

It to yeast YNL033w.

The protein resides in the cell membrane. This is an uncharacterized protein from Saccharomyces cerevisiae (strain ATCC 204508 / S288c) (Baker's yeast).